A 512-amino-acid chain; its full sequence is Chitin synthase regulatory factor 2 (512 aa).

6 Sel1-like repeats span residues 224 to 260 (SEALYLLAVCYGTGALRTEINEKEAYRLYKMAADLNH), 261 to 296 (VQAAYRVAICLQMGFGVTQNTEEAIHYFFRAASGQH), 297 to 333 (VGAMHRMALIYFRGLMSVKRDPVKAMYYLNLGALEAD), 337 to 377 (PQAL…KYGL), 378 to 414 (KDAQLRVARCFELGQLECDINLVRSFVWYRRLARKRN), and 415 to 452 (PEAMWKLSQFYLNGVDDVIYPNPELANEWAKAAAYKNH). Cys509 carries the cysteine methyl ester modification. Cys509 carries S-farnesyl cysteine lipidation. Residues 510–512 (IIS) constitute a propeptide, removed in mature form.

Its subcellular location is the membrane. Involved in chitin biosynthesis. This chain is Chitin synthase regulatory factor 2 (chr2), found in Schizosaccharomyces pombe (strain 972 / ATCC 24843) (Fission yeast).